The sequence spans 161 residues: AP-1 complex subunit sigma-1 (161 aa).

It belongs to the adaptor complexes small subunit family. In terms of assembly, adaptor protein complex 1 (AP-1) is a heterotetramer composed of two large adaptins (gamma-type subunit and beta-type subunit), a medium adaptin (mu-type subunit) and a small adaptin (sigma-type subunit). Expressed in seedlings, roots, stems, leaves, flowers and siliques (developing fruits and seeds).

The protein resides in the golgi apparatus. Its subcellular location is the cytoplasmic vesicle. It localises to the clathrin-coated vesicle membrane. Functionally, subunit of clathrin-associated adaptor protein complex 1 that plays a role in protein sorting at the trans-Golgi network and early endosomes (TGN/EE). The AP complexes mediate the recruitment of clathrin to membranes and the recognition of sorting signals within the cytosolic tails of transmembrane cargo molecules. This is AP-1 complex subunit sigma-1 (AAP19-1) from Arabidopsis thaliana (Mouse-ear cress).